A 171-amino-acid chain; its full sequence is MSRRNSYTWDELLQCARGEMFGPGNAQLPAPPMLMFDRITHIDSVGGAFDKGMIVAELDVKPELWFFDCHFISDPVMPGCLGLDAMWQMVGFYLGWIGGKGRGRALGVGEVKFRGQVLPHNRLVTYRINLKRVILRKLVMGIADAEMECDGKVIYEANDLRVGLFTSTDDF.

The active site involves His70.

Belongs to the thioester dehydratase family. FabA subfamily. Homodimer.

Its subcellular location is the cytoplasm. The catalysed reaction is a (3R)-hydroxyacyl-[ACP] = a (2E)-enoyl-[ACP] + H2O. It catalyses the reaction (3R)-hydroxydecanoyl-[ACP] = (2E)-decenoyl-[ACP] + H2O. The enzyme catalyses (2E)-decenoyl-[ACP] = (3Z)-decenoyl-[ACP]. It participates in lipid metabolism; fatty acid biosynthesis. Functionally, necessary for the introduction of cis unsaturation into fatty acids. Catalyzes the dehydration of (3R)-3-hydroxydecanoyl-ACP to E-(2)-decenoyl-ACP and then its isomerization to Z-(3)-decenoyl-ACP. Can catalyze the dehydratase reaction for beta-hydroxyacyl-ACPs with saturated chain lengths up to 16:0, being most active on intermediate chain length. In Methylococcus capsulatus (strain ATCC 33009 / NCIMB 11132 / Bath), this protein is 3-hydroxydecanoyl-[acyl-carrier-protein] dehydratase.